A 148-amino-acid polypeptide reads, in one-letter code: Transcriptional regulator MraZ (148 aa).

SpoVT-AbrB domains are found at residues 5–53 (ETAI…AEKE) and 82–125 (SAVL…SEQA).

The protein belongs to the MraZ family. As to quaternary structure, forms oligomers.

The protein localises to the cytoplasm. It is found in the nucleoid. The protein is Transcriptional regulator MraZ of Xanthomonas axonopodis pv. citri (strain 306).